The following is a 390-amino-acid chain: Na(+)/H(+) antiporter NhaA 1 (390 aa).

A run of 11 helical transmembrane segments spans residues 14–34, 59–79, 94–114, 125–145, 154–174, 179–199, 205–225, 260–280, 295–315, 328–348, and 362–382; these read SGIL…NGVL, TILW…GLEL, VALP…IFYV, GWAI…FLLG, LFLL…IAIF, LSII…ILNY, IYIY…SGIH, PIVA…VVFS, IIFG…FLAI, WLHL…SLFI, and ANKI…YFVL.

This sequence belongs to the NhaA Na(+)/H(+) (TC 2.A.33) antiporter family.

Its subcellular location is the cell inner membrane. It carries out the reaction Na(+)(in) + 2 H(+)(out) = Na(+)(out) + 2 H(+)(in). Na(+)/H(+) antiporter that extrudes sodium in exchange for external protons. This Campylobacter fetus subsp. fetus (strain 82-40) protein is Na(+)/H(+) antiporter NhaA 1.